The primary structure comprises 363 residues: dTDP-3-amino-3,6-dideoxy-alpha-D-galactopyranose transaminase (363 aa).

An N6-(pyridoxal phosphate)lysine modification is found at lysine 185.

Belongs to the DegT/DnrJ/EryC1 family. The cofactor is pyridoxal 5'-phosphate.

The catalysed reaction is dTDP-3-amino-3,6-dideoxy-alpha-D-galactopyranose + 2-oxoglutarate = dTDP-3-dehydro-6-deoxy-alpha-D-galactose + L-glutamate. Functionally, specifically aminates dTDP-6-deoxy-D-xylohex-3-ulose to form dTDP-D-Fucp3N in the biosynthesis of dTDP-3-acetamido-3,6-dideoxy-alpha-D-galactose, a glycan chain of the S-layer. The sequence is that of dTDP-3-amino-3,6-dideoxy-alpha-D-galactopyranose transaminase (fdtB) from Aneurinibacillus thermoaerophilus.